Reading from the N-terminus, the 116-residue chain is Proline-rich protein 9 (116 aa).

The polypeptide is Proline-rich protein 9 (PRR9) (Homo sapiens (Human)).